The following is a 375-amino-acid chain: GDSL esterase/lipase At5g45960 (375 aa).

Residues 1 to 28 (MRSHHRHFSSYVSFILFLFLFFISFSSS) form the signal peptide. Ser54 serves as the catalytic Nucleophile. Asn340 is a glycosylation site (N-linked (GlcNAc...) asparagine). Active-site residues include Asp348 and His351.

Belongs to the 'GDSL' lipolytic enzyme family.

It is found in the secreted. The polypeptide is GDSL esterase/lipase At5g45960 (Arabidopsis thaliana (Mouse-ear cress)).